We begin with the raw amino-acid sequence, 375 residues long: Growth/differentiation factor 8 (375 aa).

Residues 1-23 (MQKIVVYVYIYLFVQISVDPVAL) form the signal peptide. Residues 24 to 266 (DGSSQPTENT…VTDTPKRSRR (243 aa)) constitute a propeptide that is removed on maturation. N-linked (GlcNAc...) asparagine glycosylation is present at asparagine 71. Cystine bridges form between cysteine 272–cysteine 282, cysteine 281–cysteine 340, cysteine 309–cysteine 372, and cysteine 313–cysteine 374.

The protein belongs to the TGF-beta family. Homodimer; disulfide-linked.

The protein localises to the secreted. Its function is as follows. Acts specifically as a negative regulator of skeletal muscle growth. This Coturnix coturnix (Common quail) protein is Growth/differentiation factor 8 (MSTN).